The sequence spans 501 residues: Solute carrier family 2, facilitated glucose transporter member 5 (501 aa).

Position 1 is an N-acetylmethionine (Met-1). At 1–18 (MEQQDQSMKEGRLTLVLA) the chain is on the cytoplasmic side. Residues 19 to 39 (LATLIAAFGSSFQYGYNVAAV) form a helical membrane-spanning segment. Position 32 (Tyr-32) interacts with D-fructose. Over 40 to 68 (NSPALLMQQFYNETYYGRTGEFMEDFPLT) the chain is Extracellular. Asn-51 carries N-linked (GlcNAc...) asparagine glycosylation. The helical transmembrane segment at 69 to 91 (LLWSVTVSMFPFGGFIGSLLVGP) threads the bilayer. Topologically, residues 92–98 (LVNKFGR) are cytoplasmic. Residues 99-119 (KGALLFNNIFSIVPAILMGCS) traverse the membrane as a helical segment. Residues 120–126 (RVATSFE) lie on the Extracellular side of the membrane. Residues 127 to 149 (LIIISRLLVGICAGVSSNVVPMY) traverse the membrane as a helical segment. Topologically, residues 150–161 (LGELAPKNLRGA) are cytoplasmic. The helical transmembrane segment at 162–182 (LGVVPQLFITVGILVAQIFGL) threads the bilayer. D-fructose is bound at residue Gln-167. The Extracellular portion of the chain corresponds to 183–192 (RNLLANVDGW). Residues 193-213 (PILLGLTGVPAALQLLLLPFF) traverse the membrane as a helical segment. Residues 214-277 (PESPRYLLIQ…LFRMRSLRWQ (64 aa)) lie on the Cytoplasmic side of the membrane. Residues 278–298 (LLSIIVLMGGQQLSGVNAIYY) form a helical membrane-spanning segment. D-fructose-binding positions include Gln-288 and 296-298 (IYY). Residues 299–313 (YADQIYLSAGVPEEH) are Extracellular-facing. A helical membrane pass occupies residues 314–334 (VQYVTAGTGAVNVVMTFCAVF). The Cytoplasmic segment spans residues 335 to 342 (VVELLGRR). The chain crosses the membrane as a helical span at residues 343 to 363 (LLLLLGFSICLIACCVLTAAL). Residues 364 to 371 (ALQDTVSW) lie on the Extracellular side of the membrane. The helical transmembrane segment at 372–394 (MPYISIVCVISYVIGHALGPSPI) threads the bilayer. His-387 lines the D-fructose pocket. Residues 395–412 (PALLITEIFLQSSRPSAF) are Cytoplasmic-facing. The helical transmembrane segment at 413-433 (MVGGSVHWLSNFTVGLIFPFI) threads the bilayer. 419-420 (HW) is a binding site for D-fructose. The Extracellular segment spans residues 434-439 (QEGLGP). Residues 440-460 (YSFIVFAVICLLTTIYIFLIV) traverse the membrane as a helical segment. Residues 461 to 501 (PETKAKTFIEINQIFTKMNKVSEVYPEKEELKELPPVTSEQ) are Cytoplasmic-facing.

As to expression, detected in skeletal muscle, and in jejunum brush border membrane and basolateral membrane (at protein level). Expressed in small intestine, and at much lower levels in kidney, skeletal muscle, and adipose tissue.

Its subcellular location is the apical cell membrane. It localises to the cell membrane. It is found in the sarcolemma. The enzyme catalyses D-fructose(out) = D-fructose(in). The uptake of 2-deoxyglucose is inhibited by cytochalasin B. Fructose transport is inhibited by the flavonoids epigallocatechin gallate and apigenin but not quercetin. Functionally, functions as a fructose transporter that has only low activity with other monosaccharides. Can mediate the uptake of 2-deoxyglucose, but with low efficiency. Essential for fructose uptake in the small intestine. Plays a role in the regulation of salt uptake and blood pressure in response to dietary fructose. Required for the development of high blood pressure in response to high dietary fructose intake. The sequence is that of Solute carrier family 2, facilitated glucose transporter member 5 from Homo sapiens (Human).